A 207-amino-acid polypeptide reads, in one-letter code: 2,3-bisphosphoglycerate-dependent phosphoglycerate mutase (207 aa).

Substrate contacts are provided by residues R10 to N17, T23 to G24, R62, E89 to Y92, K100, R116 to R117, and G160 to N161. Residue H11 is the Tele-phosphohistidine intermediate of the active site. The active-site Proton donor/acceptor is the E89.

This sequence belongs to the phosphoglycerate mutase family. BPG-dependent PGAM subfamily. As to quaternary structure, homodimer.

It catalyses the reaction (2R)-2-phosphoglycerate = (2R)-3-phosphoglycerate. Its pathway is carbohydrate degradation; glycolysis; pyruvate from D-glyceraldehyde 3-phosphate: step 3/5. In terms of biological role, catalyzes the interconversion of 2-phosphoglycerate and 3-phosphoglycerate. This is 2,3-bisphosphoglycerate-dependent phosphoglycerate mutase from Bradyrhizobium sp. (strain ORS 278).